Here is a 599-residue protein sequence, read N- to C-terminus: Elongation factor 4 (599 aa).

The tr-type G domain occupies 2-184 (KHIRNFSIIA…RLVRDIPAPE (183 aa)). GTP-binding positions include 14-19 (DHGKST) and 131-134 (NKID).

The protein belongs to the TRAFAC class translation factor GTPase superfamily. Classic translation factor GTPase family. LepA subfamily.

It localises to the cell inner membrane. It carries out the reaction GTP + H2O = GDP + phosphate + H(+). In terms of biological role, required for accurate and efficient protein synthesis under certain stress conditions. May act as a fidelity factor of the translation reaction, by catalyzing a one-codon backward translocation of tRNAs on improperly translocated ribosomes. Back-translocation proceeds from a post-translocation (POST) complex to a pre-translocation (PRE) complex, thus giving elongation factor G a second chance to translocate the tRNAs correctly. Binds to ribosomes in a GTP-dependent manner. The sequence is that of Elongation factor 4 from Yersinia pestis bv. Antiqua (strain Antiqua).